Here is a 154-residue protein sequence, read N- to C-terminus: Putative NADPH-dependent 7-cyano-7-deazaguanine reductase (154 aa).

Residue D52 is the Proton donor of the active site. Residues 67-69 and 86-87 contribute to the substrate site; these read VES and HE.

Belongs to the GTP cyclohydrolase I family. QueF type 1 subfamily.

It localises to the cytoplasm. It catalyses the reaction 7-aminomethyl-7-carbaguanine + 2 NADP(+) = 7-cyano-7-deazaguanine + 2 NADPH + 3 H(+). It participates in tRNA modification; tRNA-queuosine biosynthesis. In terms of biological role, catalyzes the NADPH-dependent reduction of 7-cyano-7-deazaguanine (preQ0) to 7-aminomethyl-7-deazaguanine (preQ1). In Streptococcus pneumoniae serotype 4 (strain ATCC BAA-334 / TIGR4), this protein is Putative NADPH-dependent 7-cyano-7-deazaguanine reductase.